The primary structure comprises 419 residues: S-adenosylmethionine synthase (419 aa).

Residue His-15 participates in ATP binding. Asp-17 is a Mg(2+) binding site. Residue Glu-43 coordinates K(+). Positions 56 and 100 each coordinate L-methionine. The tract at residues 100 to 110 (QSPDIAQGVNE) is flexible loop. ATP contacts are provided by residues 171–173 (DGK), 248–249 (KF), Asp-257, 263–264 (RK), Ala-280, and Lys-284. Asp-257 is an L-methionine binding site. Residue Lys-288 coordinates L-methionine.

Belongs to the AdoMet synthase family. Homotetramer; dimer of dimers. Requires Mg(2+) as cofactor. K(+) serves as cofactor.

The protein resides in the cytoplasm. The enzyme catalyses L-methionine + ATP + H2O = S-adenosyl-L-methionine + phosphate + diphosphate. The protein operates within amino-acid biosynthesis; S-adenosyl-L-methionine biosynthesis; S-adenosyl-L-methionine from L-methionine: step 1/1. Functionally, catalyzes the formation of S-adenosylmethionine (AdoMet) from methionine and ATP. The overall synthetic reaction is composed of two sequential steps, AdoMet formation and the subsequent tripolyphosphate hydrolysis which occurs prior to release of AdoMet from the enzyme. This chain is S-adenosylmethionine synthase, found in Prochlorococcus marinus (strain MIT 9313).